Consider the following 273-residue polypeptide: MTREITVGGVKIGGGRPLALVAGPCVIENETATLRCAERLMSICNGVGISLIFKASYDKANRTSVTAFRGPGMKEGLRILAKVKEALGVPVLSDIHSIEQVEPAADVLDVLQIPAFLCRQTDLLVAAANTGKVINVKKGQFLAPWDMKNVVGKISSCGNENIILTERGASFGYNNLVVDMRSFPIMRSTGYPVIFDATHSVQLPGGEGTSSGGQREYVEFLSRAAVAAGVDGIFMEVHEEPEQALCDGPNSVRLDDMPALLKKLKSIDAIVNQ.

This sequence belongs to the KdsA family.

Its subcellular location is the cytoplasm. It catalyses the reaction D-arabinose 5-phosphate + phosphoenolpyruvate + H2O = 3-deoxy-alpha-D-manno-2-octulosonate-8-phosphate + phosphate. Its pathway is carbohydrate biosynthesis; 3-deoxy-D-manno-octulosonate biosynthesis; 3-deoxy-D-manno-octulosonate from D-ribulose 5-phosphate: step 2/3. The protein operates within bacterial outer membrane biogenesis; lipopolysaccharide biosynthesis. The protein is 2-dehydro-3-deoxyphosphooctonate aldolase of Geobacter sp. (strain M21).